The sequence spans 534 residues: DNA-directed RNA polymerase III subunit RPC3 (534 aa).

The disordered stretch occupies residues 161–181 (PSVPTTENSDPGPPPPAPTLV). Ser-194 carries the phosphoserine modification. A disordered region spans residues 197–228 (GKGKRRRSSDEDAAGEPKAKRPKYTTDNKEPI). Over residues 211-228 (GEPKAKRPKYTTDNKEPI) the composition is skewed to basic and acidic residues.

Belongs to the eukaryotic RPC3/POLR3C RNA polymerase subunit family. Component of the RNA polymerase III complex consisting of 17 subunits: a ten-subunit horseshoe-shaped catalytic core composed of POLR3A/RPC1, POLR3B/RPC2, POLR1C/RPAC1, POLR1D/RPAC2, POLR3K/RPC10, POLR2E/RPABC1, POLR2F/RPABC2, POLR2H/RPABC3, POLR2K/RPABC4 and POLR2L/RPABC5; a mobile stalk composed of two subunits POLR3H/RPC8 and CRCP/RPC9, protruding from the core and functioning primarily in transcription initiation; and additional subunits homologous to general transcription factors of the RNA polymerase II machinery, POLR3C/RPC3-POLR3F/RPC6-POLR3G/RPC7 heterotrimer required for transcription initiation and POLR3D/RPC4-POLR3E/RPC5 heterodimer involved in both transcription initiation and termination. Directly interacts with POLR3G/RPC7 and POLR3GL. Directly interacts with POLR3F/RPC6. Interacts with GTF3C4. As part of the RNA polymerase III complex, interacts with PKP2.

It localises to the nucleus. In terms of biological role, DNA-dependent RNA polymerase catalyzes the transcription of DNA into RNA using the four ribonucleoside triphosphates as substrates. Specific peripheric component of RNA polymerase III (Pol III) which synthesizes small non-coding RNAs including 5S rRNA, snRNAs, tRNAs and miRNAs from at least 500 distinct genomic loci. Part of POLR3C/RPC3-POLR3F/RPC6-POLR3G/RPC7 heterotrimer, coordinates the dynamics of Pol III stalk and clamp modules during the transition from apo to elongation state. Pol III plays a key role in sensing and limiting infection by intracellular bacteria and DNA viruses. Acts as a nuclear and cytosolic DNA sensor involved in innate immune response. Can sense non-self dsDNA that serves as template for transcription into dsRNA. The non-self RNA polymerase III transcripts, such as Epstein-Barr virus-encoded RNAs (EBERs) induce type I interferon and NF-kappa-B through the RIG-I pathway. Preferentially binds single-stranded DNA (ssDNA) in a sequence-independent manner. The chain is DNA-directed RNA polymerase III subunit RPC3 from Homo sapiens (Human).